A 593-amino-acid polypeptide reads, in one-letter code: Serine/threonine-protein kinase SSN3 (593 aa).

Positions Y90–F489 constitute a Protein kinase domain. I96–V104 serves as a coordination point for ATP. The segment at K161–S199 is disordered. Residues P169–E185 show a composition bias toward polar residues. Residues T186–S199 show a composition bias toward low complexity. Residue K211 coordinates ATP. D312 serves as the catalytic Proton acceptor. 2 disordered regions span residues D517 to G551 and A569 to K593. Positions N518–Q536 are enriched in polar residues. Low complexity predominate over residues G540–G551. Over residues G573–G585 the composition is skewed to polar residues.

Belongs to the protein kinase superfamily. CMGC Ser/Thr protein kinase family. CDC2/CDKX subfamily. In terms of assembly, component of the SRB8-11 complex, a regulatory module of the Mediator complex. Mg(2+) serves as cofactor.

The protein localises to the nucleus. It catalyses the reaction L-seryl-[protein] + ATP = O-phospho-L-seryl-[protein] + ADP + H(+). The enzyme catalyses L-threonyl-[protein] + ATP = O-phospho-L-threonyl-[protein] + ADP + H(+). It carries out the reaction [DNA-directed RNA polymerase] + ATP = phospho-[DNA-directed RNA polymerase] + ADP + H(+). Component of the SRB8-11 complex. The SRB8-11 complex is a regulatory module of the Mediator complex which is itself involved in regulation of basal and activated RNA polymerase II-dependent transcription. The SRB8-11 complex may be involved in the transcriptional repression of a subset of genes regulated by Mediator. It may inhibit the association of the Mediator complex with RNA polymerase II to form the holoenzyme complex. The SRB8-11 complex phosphorylates the C-terminal domain (CTD) of the largest subunit of RNA polymerase II. The chain is Serine/threonine-protein kinase SSN3 (SSN3) from Kluyveromyces lactis (strain ATCC 8585 / CBS 2359 / DSM 70799 / NBRC 1267 / NRRL Y-1140 / WM37) (Yeast).